Consider the following 427-residue polypeptide: Isocitrate dehydrogenase [NADP] (427 aa).

NADP(+) is bound at residue Thr114. Positions 123, 125, 129, 139, and 163 each coordinate D-threo-isocitrate. Asp317 provides a ligand contact to Mg(2+). NADP(+)-binding positions include 349–355 (HGTAPKY), Asn362, Tyr401, and Arg405.

This sequence belongs to the isocitrate and isopropylmalate dehydrogenases family. As to quaternary structure, homodimer. Mg(2+) is required as a cofactor. It depends on Mn(2+) as a cofactor.

It carries out the reaction D-threo-isocitrate + NADP(+) = 2-oxoglutarate + CO2 + NADPH. In terms of biological role, catalyzes the oxidative decarboxylation of isocitrate to 2-oxoglutarate and carbon dioxide with the concomitant reduction of NADP(+). The polypeptide is Isocitrate dehydrogenase [NADP] (icd) (Coxiella burnetii (strain RSA 493 / Nine Mile phase I)).